The chain runs to 207 residues: Guanylate kinase (207 aa).

The 181-residue stretch at glycine 5–isoleucine 185 folds into the Guanylate kinase-like domain. Glycine 12–serine 19 provides a ligand contact to ATP.

It belongs to the guanylate kinase family.

The protein localises to the cytoplasm. The enzyme catalyses GMP + ATP = GDP + ADP. Essential for recycling GMP and indirectly, cGMP. This Campylobacter jejuni subsp. jejuni serotype O:2 (strain ATCC 700819 / NCTC 11168) protein is Guanylate kinase (gmk).